A 953-amino-acid polypeptide reads, in one-letter code: Coatomer subunit beta (953 aa).

Thr2 is modified (N-acetylthreonine). HEAT repeat units lie at residues 96-131, 132-168, 240-276, 277-314, 316-353, and 396-433; these read HEMI…KEAE, LLEP…NFEH, SERA…SAPT, AIKA…HPAH, RVLQ…SRNV, and DMAA…RFDN. Lys494 carries the N6-acetyllysine modification.

In terms of assembly, oligomeric complex that consists of at least the alpha, beta, beta', gamma, delta, epsilon and zeta subunits. Interacts with CAPN8 and PRKCE. Interacts with SCYL1. Interacts with COPG1. Interacts with ARF1 (myristoylated); this interaction is required for binding of COPB1 to Golgi membranes. Interacts (via trunk domain) with ARF1 (via switch I region); the interaction is direct. Interacts with KCNK2 (via N-terminus); this interaction increases the channel-mediated whole cell currents and promotes plasma membrane expression of KCNK2. Interacts with STX17. Interacts with TMEM115. Interacts with TMEM41B. High expression in the lung, kidney, skeletal muscle and small intestine, and lower level of expression in heart, liver, spleen, stomach and fat.

It is found in the cytoplasm. Its subcellular location is the golgi apparatus membrane. The protein localises to the cytoplasmic vesicle. The protein resides in the COPI-coated vesicle membrane. It localises to the cell membrane. It is found in the endoplasmic reticulum-Golgi intermediate compartment. The coatomer is a cytosolic protein complex that binds to dilysine motifs and reversibly associates with Golgi non-clathrin-coated vesicles, which further mediate biosynthetic protein transport from the ER, via the Golgi up to the trans Golgi network. Coatomer complex is required for budding from Golgi membranes, and is essential for the retrograde Golgi-to-ER transport of dilysine-tagged proteins. In mammals, the coatomer can only be recruited by membranes associated to ADP-ribosylation factors (ARFs), which are small GTP-binding proteins; the complex also influences the Golgi structural integrity, as well as the processing, activity, and endocytic recycling of LDL receptors. Plays a functional role in facilitating the transport of kappa-type opioid receptor mRNAs into axons and enhances translation of these proteins. Required for limiting lipid storage in lipid droplets. Involved in lipid homeostasis by regulating the presence of perilipin family members PLIN2 and PLIN3 at the lipid droplet surface and promoting the association of adipocyte surface triglyceride lipase (PNPLA2) with the lipid droplet to mediate lipolysis. Involved in the Golgi disassembly and reassembly processes during cell cycle. Involved in autophagy by playing a role in early endosome function. Plays a role in organellar compartmentalization of secretory compartments including endoplasmic reticulum (ER)-Golgi intermediate compartment (ERGIC), Golgi, trans-Golgi network (TGN) and recycling endosomes, and in biosynthetic transport of CAV1. The protein is Coatomer subunit beta of Sus scrofa (Pig).